Reading from the N-terminus, the 224-residue chain is uncharacterized protein (224 aa).

A signal peptide spans 1 to 21 (MKRTSRSLTAALLGIAALLAG). Residue Cys22 is the site of N-palmitoyl cysteine attachment. Residue Cys22 is the site of S-diacylglycerol cysteine attachment.

To M.bovis LprP.

It is found in the cell membrane. This is an uncharacterized protein from Mycobacterium tuberculosis (strain ATCC 25618 / H37Rv).